A 174-amino-acid chain; its full sequence is MHRFVLALVVFAGAAIVWAADDAAHEEGVEWTGKPWMGKWESDPSKDENVEEFKKKLQLPMSHSEMNKNSKVWIHHYKKGDEYHHKIIINDAHYKNDIVFKLGQESAGSYNGSSFSVKYEDKDGALVGSVHYTGTKEQSLDKTINNVFKLEGDHLVKTSTIEGVTMKRHYNKRQ.

A signal peptide spans 1-19 (MHRFVLALVVFAGAAIVWA). The interval 30–60 (EWTGKPWMGKWESDPSKDENVEEFKKKLQLP) is SAHS-c1. Positions 77-105 (YKKGDEYHHKIIINDAHYKNDIVFKLGQE) are SAHS-c2. N-linked (GlcNAc...) asparagine glycosylation occurs at Asn111. The interval 118–172 (KYEDKDGALVGSVHYTGTKEQSLDKTINNVFKLEGDHLVKTSTIEGVTMKRHYNK) is SAHS-c3.

The protein belongs to the Secretory-abundant heat soluble protein (SAHS) family.

Its subcellular location is the secreted. Functionally, secreted heat soluble protein acting as a molecular shield in water-deficient condition. Tardigrade-specific intrinsically disordered proteins (TDPs) are essential for desiccation tolerance by forming non-crystalline amorphous solids upon desiccation, and this vitrified state mirrors their protective capabilities. This Ramazzottius varieornatus (Water bear) protein is Secretory-abundant heat soluble protein 2.